The primary structure comprises 1392 residues: Condensin complex subunit 1 (1392 aa).

An interaction with SMC2 and SMC4 region spans residues 1–593 (MSPHNFEFHL…TGSKDSPSVP (593 aa)). Phosphoserine occurs at positions 20 and 575. Disordered regions lie at residues 569 to 602 (EASTQDSHGDTDPGLTGSKDSPSVPEPEGSQSND), 945 to 966 (REEQEHRAKEPKEKTASSETTM), and 1293 to 1392 (FETG…RHRS). A compositionally biased stretch (basic and acidic residues) spans 945–960 (REEQEHRAKEPKEKTA). 4 positions are modified to phosphoserine: serine 1300, serine 1305, serine 1320, and serine 1323. A Phosphothreonine modification is found at threonine 1329. A Bipartite nuclear localization signal motif is present at residues 1332 to 1353 (PRRTKPGRPQTQQRKKSQRKAK). Residues 1344 to 1353 (QRKKSQRKAK) show a composition bias toward basic residues. Residues serine 1358, serine 1361, serine 1362, and serine 1367 each carry the phosphoserine modification. Residues 1360–1373 (ESSEDELSAEMTEE) are compositionally biased toward acidic residues. A phosphothreonine; by CDK1 mark is found at threonine 1375 and threonine 1380. Position 1386 is a phosphoserine (serine 1386).

The protein belongs to the CND1 (condensin subunit 1) family. In terms of assembly, component of the condensin complex, which contains the SMC2 and SMC4 heterodimer, and three non SMC subunits that probably regulate the complex: NCAPH/BRRN1, NCAPD2/CAPD2 and NCAPG. Interacts with histones H1 and H3. In terms of processing, phosphorylated by CDK1. Its phosphorylation, as well as that of NCAPH and NCAPG subunits, activates the condensin complex and is required for chromosome condensation.

The protein localises to the nucleus. It localises to the cytoplasm. The protein resides in the chromosome. Regulatory subunit of the condensin complex, a complex required for conversion of interphase chromatin into mitotic-like condense chromosomes. The condensin complex probably introduces positive supercoils into relaxed DNA in the presence of type I topoisomerases and converts nicked DNA into positive knotted forms in the presence of type II topoisomerases. May target the condensin complex to DNA via its C-terminal domain. May promote the resolution of double-strand DNA catenanes (intertwines) between sister chromatids. Condensin-mediated compaction likely increases tension in catenated sister chromatids, providing directionality for type II topoisomerase-mediated strand exchanges toward chromatid decatenation. Required for decatenation of non-centromeric ultrafine DNA bridges during anaphase. Early in neurogenesis, may play an essential role to ensure accurate mitotic chromosome condensation in neuron stem cells, ultimately affecting neuron pool and cortex size. The polypeptide is Condensin complex subunit 1 (Ncapd2) (Mus musculus (Mouse)).